A 407-amino-acid chain; its full sequence is uncharacterized protein (407 aa).

Disordered regions lie at residues 1–62 (MTGR…NGDP) and 350–379 (SVTP…KPSS). Basic and acidic residues predominate over residues 17 to 30 (PVEKMPRFQREHGA).

This is an uncharacterized protein from Ictaluridae (bullhead catfishes).